Here is a 245-residue protein sequence, read N- to C-terminus: Protein ARV 1 (245 aa).

5 helical membrane-spanning segments follow: residues 70–90 (INPA…AYLL), 117–137 (IKVL…FAIA), 163–183 (IFLL…FVDI), 200–220 (TMTR…LVGQ), and 224–244 (PTIF…FFRI).

This sequence belongs to the ARV1 family. In terms of tissue distribution, restricted to tissues in which cells are actively dividing or expanding. Mostly expressed in roots and flowers, and, to a lower extent, in stems and leaves.

Its subcellular location is the endoplasmic reticulum membrane. Its function is as follows. Mediator of sterol homeostasis involved in sterol uptake, trafficking and distribution into membranes. Also regulates the sphingolipid metabolism. The polypeptide is Protein ARV 1 (Arabidopsis thaliana (Mouse-ear cress)).